The primary structure comprises 461 residues: UPF0053 protein YhdT (461 aa).

The CNNM transmembrane domain occupies 1–202 (MDDIDSLILI…LKNGEINPSE (202 aa)). Helical transmembrane passes span 8–28 (ILIG…FAIV), 103–123 (VSFA…GELA), and 137–157 (LLIA…IWIL). CBS domains follow at residues 221 to 280 (MIPR…MTEE) and 290 to 347 (YVRP…IRDE).

The protein belongs to the UPF0053 family.

The protein resides in the cell membrane. The chain is UPF0053 protein YhdT (yhdT) from Bacillus subtilis (strain 168).